Consider the following 201-residue polypeptide: Putative toxin HigB2 (201 aa).

It belongs to the mycobacterial HigB family.

Putative toxic component of a type II toxin-antitoxin (TA) system. Its cognate antitoxin would be HigA2. This chain is Putative toxin HigB2, found in Mycobacterium tuberculosis (strain ATCC 25618 / H37Rv).